We begin with the raw amino-acid sequence, 479 residues long: Ribulose bisphosphate carboxylase large chain (479 aa).

A propeptide spanning residues 1–2 (MS) is cleaved from the precursor. The residue at position 3 (Pro-3) is an N-acetylproline. Substrate is bound by residues Thr-65, Asn-123, 173–177 (TIKPK), and 201–204 (KDDE). The active-site Proton acceptor is the Lys-175. Mg(2+) contacts are provided by Lys-201, Asp-203, and Glu-204. Lys-201 is modified (N6-carboxylysine). Phosphoserine is present on Ser-208. Residue His-294 is the Proton acceptor of the active site. Substrate-binding positions include 294 to 295 (HR) and His-327. At Thr-330 the chain carries Phosphothreonine. Substrate-binding positions include Lys-334 and 379–381 (SGG).

The protein belongs to the RuBisCO large chain family. Type I subfamily. As to quaternary structure, heterohexadecamer of 8 large chains and 8 small chains; disulfide-linked. The disulfide link is formed within the large subunit homodimers. Interacts with RBCX1 and RBCX1. An intermediate complex made of eight RbcL subunits interacts with the chaperone BSD2. Mg(2+) serves as cofactor. Post-translationally, the disulfide bond which can form in the large chain dimeric partners within the hexadecamer appears to be associated with oxidative stress and protein turnover.

Its subcellular location is the plastid. It localises to the chloroplast. It catalyses the reaction 2 (2R)-3-phosphoglycerate + 2 H(+) = D-ribulose 1,5-bisphosphate + CO2 + H2O. It carries out the reaction D-ribulose 1,5-bisphosphate + O2 = 2-phosphoglycolate + (2R)-3-phosphoglycerate + 2 H(+). In terms of biological role, ruBisCO catalyzes two reactions: the carboxylation of D-ribulose 1,5-bisphosphate, the primary event in carbon dioxide fixation, as well as the oxidative fragmentation of the pentose substrate in the photorespiration process. Both reactions occur simultaneously and in competition at the same active site. Binds to abscisic acid (ABA). In Arabidopsis thaliana (Mouse-ear cress), this protein is Ribulose bisphosphate carboxylase large chain.